An 84-amino-acid polypeptide reads, in one-letter code: Small ribosomal subunit protein uS17 (84 aa).

It belongs to the universal ribosomal protein uS17 family. Part of the 30S ribosomal subunit.

Functionally, one of the primary rRNA binding proteins, it binds specifically to the 5'-end of 16S ribosomal RNA. In Borreliella burgdorferi (strain ATCC 35210 / DSM 4680 / CIP 102532 / B31) (Borrelia burgdorferi), this protein is Small ribosomal subunit protein uS17.